The primary structure comprises 104 residues: Small ribosomal subunit protein uS10 (104 aa).

Belongs to the universal ribosomal protein uS10 family. Part of the 30S ribosomal subunit.

Functionally, involved in the binding of tRNA to the ribosomes. The sequence is that of Small ribosomal subunit protein uS10 from Aliarcobacter butzleri (strain RM4018) (Arcobacter butzleri).